A 380-amino-acid polypeptide reads, in one-letter code: MTLVEELLGAKTGEVVVREVDLVYAHDGTMPLIIEAFRRNFTRVVPRTYVFFDHVFPAPTVKIANLQKEILEFAGEQGIPVIQGQGISHQLAVEMGLADNARIVVGADSHTPTLGALGVFAVGIGATDTAVVMGLGKTWFRVPESVSVVFEGRPGKNVMAADAMIHIITALRDFEMNYKAIEFFNVPFSFDERLTLTNFSVEANAKTGIIGEEYSGDGYVLELGIDLSSLPPMVAKPHHPSNGVPVEEVEGTKIDQVFIGSCTNGRFEQIERAAEILAGEEVAVRTIIGPASANVYRRMIETGIAKVLIDAGAVILPPGCGPCLGRHMGVAGDGDVILSTTNRNFRGRMGSPNSEIYLASPVTAALSALYGEITTPEGGA.

Positions 262, 320, and 323 each coordinate [4Fe-4S] cluster.

It belongs to the aconitase/IPM isomerase family. LeuC type 2 subfamily. Heterodimer of LeuC and LeuD. The cofactor is [4Fe-4S] cluster.

The catalysed reaction is (2R,3S)-3-isopropylmalate = (2S)-2-isopropylmalate. It participates in amino-acid biosynthesis; L-leucine biosynthesis; L-leucine from 3-methyl-2-oxobutanoate: step 2/4. Functionally, catalyzes the isomerization between 2-isopropylmalate and 3-isopropylmalate, via the formation of 2-isopropylmaleate. In Thermococcus kodakarensis (strain ATCC BAA-918 / JCM 12380 / KOD1) (Pyrococcus kodakaraensis (strain KOD1)), this protein is 3-isopropylmalate dehydratase large subunit.